We begin with the raw amino-acid sequence, 515 residues long: MYRSLRPPTSIPPPPPSGPSPYPAMINGYPPDVPVGSPANGDAELFVPLQRVMPPTGGRNSIRYRNYAPCQNTTKFFYVDNKLSDLDTYNEDANHSNFRTTVIHNQDLDPSTAATETIQLDNRSCWGGELKTAVKTNCPNISSFFQSDTVRVRLMSKRDPGGTDPDAGVNNPPGAEYKWYDLRIPEGNYALNEIIDLLNEGIVQLYLQEGRQNNVLKSDIGVKFDTRYLDLLKDPVTGLVTPGTYVYKGYHPDIILLPGCAVDFTFSRLSLLLGIAKREPYSKGFTITYEDLQGGNVPALLDLSSVQVDDQDEDVIVVADARPLLKDSKGVSYNVITTGVTQPQTAYRSWLLAYHTLDSPARNKTLLTVPDMAGGIGAMYTSMPDTFTAPAGFKEDNTTNLCPVVAMNLFPSFNKVFYQGASAYVQRLENATQSATAAFNRFPENEILKQAPPMNVSSVCDNQPAVVQQGVLPLKNSLSGLQRVLITDDRRRPIPYVYKTIATVQPRVLSSSTLQ.

The tract at residues 1 to 25 is disordered; the sequence is MYRSLRPPTSIPPPPPSGPSPYPAM. The span at 9–22 shows a compositional bias: pro residues; that stretch reads TSIPPPPPSGPSPY.

Belongs to the adenoviridae penton family. As to quaternary structure, interacts with the fiber protein (via N-terminal tail region). Interacts with the capsid vertex protein; this interaction binds the penton base to neighboring peripentonal hexons.

Its subcellular location is the virion. The protein localises to the host nucleus. Major capsid protein that self-associates to form penton base pentamers, each in the shape of a pentagon, situated at the 12 vertices of the pseudo T=25 capsid. Involved in virus secondary attachment to host cell after initial attachment by the fiber protein, and in endocytosis of virions. As the virus enters the host cell, penton proteins are shed concomitant with virion acidification in the endosome. In Galliformes (FAdV-1), this protein is Penton protein.